A 424-amino-acid polypeptide reads, in one-letter code: Homeobox even-skipped homolog protein 2 (424 aa).

Disordered stretches follow at residues 18-65 and 132-178; these read PAGK…DTPT and TTQL…GPDQ. 2 stretches are compositionally biased toward polar residues: residues 50–65 and 132–145; these read RPTSASLHNTVGDTPT and TTQLKENTNKVYSD. The segment covering 146-175 has biased composition (low complexity); that stretch reads NGSSTNTSSNGSNITNLNGNSSSIGNSGSG. A DNA-binding region (homeobox) is located at residues 179–238; sequence VRRYRTAFTREQIGRLEKEFYRENYVSRPRRCELAAALNLPETTIKVWFQNRRMKDKRQR.

Belongs to the even-skipped homeobox family.

It localises to the nucleus. The sequence is that of Homeobox even-skipped homolog protein 2 (EVX2) from Heterodontus francisci (Horn shark).